The chain runs to 571 residues: Potassium-transporting ATPase potassium-binding subunit (571 aa).

The next 11 helical transmembrane spans lie at 5-25 (GWIQIALYGAIVLALVKPLGS), 64-84 (LAYTGAVILFHVLGFAVLYAI), 136-156 (GLTHQNFLSAATGIAVAVALI), 179-199 (LYVLLPICVPYTLFLVWQGIP), 254-274 (LSNLVQMVSIFAIGAALTNVF), 285-305 (WAILGAMGILFLAGVLVTYWA), 330-350 (FGIAASALFAVITTAASCGAV), 357-376 (FTALGGLIPLLNMQLGEIII), 421-441 (MLGILCLPLMMLGFTALATVV), 488-508 (LAIGMLVGRFFVKIPVLAIAG), and 527-547 (GGLFVGLLVGVILIIGGLTFF).

Belongs to the KdpA family. As to quaternary structure, the system is composed of three essential subunits: KdpA, KdpB and KdpC.

The protein localises to the cell inner membrane. Its function is as follows. Part of the high-affinity ATP-driven potassium transport (or Kdp) system, which catalyzes the hydrolysis of ATP coupled with the electrogenic transport of potassium into the cytoplasm. This subunit binds the periplasmic potassium ions and delivers the ions to the membrane domain of KdpB through an intramembrane tunnel. The sequence is that of Potassium-transporting ATPase potassium-binding subunit from Methylobacterium radiotolerans (strain ATCC 27329 / DSM 1819 / JCM 2831 / NBRC 15690 / NCIMB 10815 / 0-1).